We begin with the raw amino-acid sequence, 827 residues long: Periplasmic nitrate reductase (827 aa).

Residues 1 to 34 (MSLTRRDFIKANAVPATAAAAGLATPAIAQPAKA) constitute a signal peptide (tat-type signal). A 4Fe-4S Mo/W bis-MGD-type domain is found at 36 to 92 (IRWDKGVCRFCGTGCSVLVGVQDGRVVATQGDPDSPVNRGLNCIKGYFLSKIMYGED). [4Fe-4S] cluster-binding residues include cysteine 43, cysteine 46, cysteine 50, and cysteine 78. Mo-bis(molybdopterin guanine dinucleotide)-binding positions include lysine 80, glutamine 148, asparagine 173, cysteine 177, 210-217 (WGSNMAEM), 241-245 (STFEH), 260-262 (QTD), methionine 371, glutamine 375, asparagine 481, 507-508 (SD), lysine 530, aspartate 557, and 717-726 (TGRVLEHWHS). Phenylalanine 793 serves as a coordination point for substrate. Residues asparagine 801 and lysine 818 each coordinate Mo-bis(molybdopterin guanine dinucleotide).

It belongs to the prokaryotic molybdopterin-containing oxidoreductase family. NasA/NapA/NarB subfamily. In terms of assembly, component of the periplasmic nitrate reductase NapAB complex composed of NapA and NapB. [4Fe-4S] cluster serves as cofactor. The cofactor is Mo-bis(molybdopterin guanine dinucleotide). Predicted to be exported by the Tat system. The position of the signal peptide cleavage has not been experimentally proven.

Its subcellular location is the periplasm. It carries out the reaction 2 Fe(II)-[cytochrome] + nitrate + 2 H(+) = 2 Fe(III)-[cytochrome] + nitrite + H2O. Functionally, catalytic subunit of the periplasmic nitrate reductase complex NapAB. Receives electrons from NapB and catalyzes the reduction of nitrate to nitrite. The sequence is that of Periplasmic nitrate reductase from Paramagnetospirillum magnetotacticum (Aquaspirillum magnetotacticum).